Consider the following 876-residue polypeptide: MKKLKASEIRQKYLDFFVEKGHMVEPSAPLVPIDDDTLLWINSGVATLKKYFDGRETPKKPRIVNSQKAIRTNDIENVGFTARHHTFFEMLGNFSIGDYFKQEAIEFAWEFLTSDKWMGMEPDKLYVTIHPEDMEAYNIWHKDIGLEESRIIRIEGNFWDIGEGPSGPNTEIFYDRGEAYGQDDPAEEMYPGGENERYLEVWNLVFSEFNHNKDHSYTPLPNKNIDTGMGLERMASVSQNVRTNYETDLFMPIMNEIEKVSGKQYLVNNEQDVAFKVIADHIRTIAFAISDGALPANEGRGYVLRRLLRRAVRFSQTLGINEPFMYKLVDIVADIMEPYYPNVKEKADFIKRVIKSEEERFHETLEDGLAILNELIKKAKATTNEINGKDAFKLYDTYGFPIELTEEIAVQAGLKVDMTTFESEMQQQRDRARQARQNSQSMQVQSEVLKNITSASTFVGYDTATAQTTLTHLIYNGEEVSQVEAGETVYFMLTETPFYAVSGGQVADTGIVYNDNFEIAVSEVTKAPNGQNLHKGAVQFGQVNVGATVSAEVNQNDRRDIQKNHSATHLLHAALKSVLGDHVNQAGSLVEADRLRFDFSHFGPMTNDEIDQVERLVNEEIWKGIDVNIQEMDIASAKEMGAMALFGEKYGDVVRVVNMAPFSIELCGGIHVRNTSEIGLFKIVSESGTGAGVRRIEALTGKAAFLYLEDIQEKFNTMKSQMKVKSDDQVIDKLTQLQDEEKALLKQLEQRDKEITSLKMGNIEDQVEEINGYKVLVTEVDVPNAKAIRSTMDDFKSKLQDTIIILASNVDDKVSMVATVPKSLTNNVKAGDLIKQMAPIVSGKGGGRPDMAQGGGTQPENISKSLSFIKDYIKNL.

Residues His-565, His-569, Cys-667, and His-671 each coordinate Zn(2+).

It belongs to the class-II aminoacyl-tRNA synthetase family. Requires Zn(2+) as cofactor.

It localises to the cytoplasm. It catalyses the reaction tRNA(Ala) + L-alanine + ATP = L-alanyl-tRNA(Ala) + AMP + diphosphate. Catalyzes the attachment of alanine to tRNA(Ala) in a two-step reaction: alanine is first activated by ATP to form Ala-AMP and then transferred to the acceptor end of tRNA(Ala). Also edits incorrectly charged Ser-tRNA(Ala) and Gly-tRNA(Ala) via its editing domain. This chain is Alanine--tRNA ligase, found in Staphylococcus aureus (strain bovine RF122 / ET3-1).